The primary structure comprises 78 residues: UPF0235 protein AF_2072 (78 aa).

Belongs to the UPF0235 family.

The sequence is that of UPF0235 protein AF_2072 from Archaeoglobus fulgidus (strain ATCC 49558 / DSM 4304 / JCM 9628 / NBRC 100126 / VC-16).